A 289-amino-acid polypeptide reads, in one-letter code: Bifunctional aminodeoxychorismate lyase / D-amino acid transaminase (289 aa).

Pyridoxal 5'-phosphate is bound at residue Arg50. Lys149 carries the post-translational modification N6-(pyridoxal phosphate)lysine. Residues Tyr153, Thr216, and Thr217 each contribute to the pyridoxal 5'-phosphate site. Ser252 contributes to the 2-oxoglutarate binding site. Ser253 is a pyridoxal 5'-phosphate binding site. 2-oxoglutarate is bound by residues Met254 and Thr255.

Belongs to the class-IV pyridoxal-phosphate-dependent aminotransferase family. As to quaternary structure, homodimer. Pyridoxal 5'-phosphate is required as a cofactor.

The catalysed reaction is 4-amino-4-deoxychorismate = 4-aminobenzoate + pyruvate + H(+). It catalyses the reaction D-alanine + 2-oxoglutarate = D-glutamate + pyruvate. It functions in the pathway cofactor biosynthesis; tetrahydrofolate biosynthesis; 4-aminobenzoate from chorismate: step 2/2. Its pathway is cell wall biogenesis; peptidoglycan biosynthesis. Bifunctional enzyme that catalyzes two enzymatic reactions in biochemically unrelated pathways: acts as an aminodeoxychorismate (ADC) lyase (ADCL) in folate biosynthesis, converting 4-amino-4-deoxychorismate (ADC) to 4-aminobenzoate (PABA), and as a D-amino acid transaminase (DAAT) in peptidoglycan (PG) biosynthesis. DAAT activity is strictly restricted to D-alanine and D-glutamate. May function as a metabolic toggle that alternates between ADCL and DAAT activity, prioritizing the former over the latter in response to substrate accumulation. Bifunctionality of this enzyme provides a failsafe mechanism for a metabolic coupling between nucleic acid and cell wall biosynthesis that appears to ensure prioritization of PABA production over D-alanine/D-glutamate biosynthesis. The protein is Bifunctional aminodeoxychorismate lyase / D-amino acid transaminase of Mycobacterium tuberculosis (strain ATCC 25618 / H37Rv).